A 341-amino-acid polypeptide reads, in one-letter code: MKSVTLKELSLLLDGVVQGDETLVINSVATLEHATSGQISFLANSKYRAQLESTQASAVLLSAKDAQDYQGTALVVKDPYVGFARVAQLLDTTPKAAMGIHPSAQIDPSAQLGDGVAIGANAVIGANVILGENVQIGAGTVIGQDSIIGSNTRLWANVTLYHNVHLGQDCIIHSGAIIGSDGFGYANERGQWIKIPQTGGVRIGDRVEIGANSTIDRGALGHTEIHNGVIIDNQVQVAHNDIIGENTAIAGSTTIAGSVTIGKHCIIGGNCAIAGHLTIADGVHLSGATNVTGNMREPGLYSSATVAMDNNLWRKNTVRFRQLDELFQRVKAIEKNLNTPE.

Histidine 239 (proton acceptor) is an active-site residue.

The protein belongs to the transferase hexapeptide repeat family. LpxD subfamily. In terms of assembly, homotrimer.

It catalyses the reaction a UDP-3-O-[(3R)-3-hydroxyacyl]-alpha-D-glucosamine + a (3R)-hydroxyacyl-[ACP] = a UDP-2-N,3-O-bis[(3R)-3-hydroxyacyl]-alpha-D-glucosamine + holo-[ACP] + H(+). Its pathway is bacterial outer membrane biogenesis; LPS lipid A biosynthesis. Catalyzes the N-acylation of UDP-3-O-acylglucosamine using 3-hydroxyacyl-ACP as the acyl donor. Is involved in the biosynthesis of lipid A, a phosphorylated glycolipid that anchors the lipopolysaccharide to the outer membrane of the cell. This chain is UDP-3-O-acylglucosamine N-acyltransferase, found in Shewanella oneidensis (strain ATCC 700550 / JCM 31522 / CIP 106686 / LMG 19005 / NCIMB 14063 / MR-1).